A 944-amino-acid chain; its full sequence is 2-oxoglutarate dehydrogenase E1 component (944 aa).

The tract at residues 915–944 (RRRSSPAEGDPTVHKKEQERIVSDSLTRKN) is disordered. Positions 925 to 936 (PTVHKKEQERIV) are enriched in basic and acidic residues.

This sequence belongs to the alpha-ketoglutarate dehydrogenase family. Homodimer. Part of the 2-oxoglutarate dehydrogenase (OGDH) complex composed of E1 (2-oxoglutarate dehydrogenase), E2 (dihydrolipoamide succinyltransferase) and E3 (dihydrolipoamide dehydrogenase); the complex contains multiple copies of the three enzymatic components (E1, E2 and E3). Thiamine diphosphate serves as cofactor.

The catalysed reaction is N(6)-[(R)-lipoyl]-L-lysyl-[protein] + 2-oxoglutarate + H(+) = N(6)-[(R)-S(8)-succinyldihydrolipoyl]-L-lysyl-[protein] + CO2. Its function is as follows. E1 component of the 2-oxoglutarate dehydrogenase (OGDH) complex which catalyzes the decarboxylation of 2-oxoglutarate, the first step in the conversion of 2-oxoglutarate to succinyl-CoA and CO(2). The protein is 2-oxoglutarate dehydrogenase E1 component of Bacillus velezensis (strain DSM 23117 / BGSC 10A6 / LMG 26770 / FZB42) (Bacillus amyloliquefaciens subsp. plantarum).